The following is a 331-amino-acid chain: Lipoyl synthase (331 aa).

Residues 1–20 (MTTETNPAVTPAYNPSEKQK) are disordered. Cys-71, Cys-76, Cys-82, Cys-97, Cys-101, Cys-104, and Ser-311 together coordinate [4Fe-4S] cluster. The Radical SAM core domain occupies 82–300 (CFGKGTATFM…EEEAYKMGFA (219 aa)).

It belongs to the radical SAM superfamily. Lipoyl synthase family. The cofactor is [4Fe-4S] cluster.

It localises to the cytoplasm. It carries out the reaction [[Fe-S] cluster scaffold protein carrying a second [4Fe-4S](2+) cluster] + N(6)-octanoyl-L-lysyl-[protein] + 2 oxidized [2Fe-2S]-[ferredoxin] + 2 S-adenosyl-L-methionine + 4 H(+) = [[Fe-S] cluster scaffold protein] + N(6)-[(R)-dihydrolipoyl]-L-lysyl-[protein] + 4 Fe(3+) + 2 hydrogen sulfide + 2 5'-deoxyadenosine + 2 L-methionine + 2 reduced [2Fe-2S]-[ferredoxin]. It functions in the pathway protein modification; protein lipoylation via endogenous pathway; protein N(6)-(lipoyl)lysine from octanoyl-[acyl-carrier-protein]: step 2/2. Functionally, catalyzes the radical-mediated insertion of two sulfur atoms into the C-6 and C-8 positions of the octanoyl moiety bound to the lipoyl domains of lipoate-dependent enzymes, thereby converting the octanoylated domains into lipoylated derivatives. The chain is Lipoyl synthase from Janthinobacterium sp. (strain Marseille) (Minibacterium massiliensis).